A 367-amino-acid polypeptide reads, in one-letter code: Flagellar P-ring protein (367 aa).

Positions Met-1–Ala-22 are cleaved as a signal peptide.

The protein belongs to the FlgI family. The basal body constitutes a major portion of the flagellar organelle and consists of four rings (L,P,S, and M) mounted on a central rod.

The protein localises to the periplasm. It is found in the bacterial flagellum basal body. Functionally, assembles around the rod to form the L-ring and probably protects the motor/basal body from shearing forces during rotation. The chain is Flagellar P-ring protein from Legionella pneumophila (strain Corby).